The chain runs to 324 residues: D-alanine--D-alanine ligase (324 aa).

Residues 121–321 (NQYLKAFGVR…IKDVMTDIIE (201 aa)) enclose the ATP-grasp domain. 149-204 (VEKIGLPCFIKPNLGGSSFGVTKVKTREQIQPAIAKAFSEAEEVMIEAFMGGTELT) is a binding site for ATP. Mg(2+) is bound by residues Asp275, Glu288, and Asn290.

Belongs to the D-alanine--D-alanine ligase family. The cofactor is Mg(2+). Requires Mn(2+) as cofactor.

It is found in the cytoplasm. It catalyses the reaction 2 D-alanine + ATP = D-alanyl-D-alanine + ADP + phosphate + H(+). The protein operates within cell wall biogenesis; peptidoglycan biosynthesis. Functionally, cell wall formation. In Bacteroides fragilis (strain YCH46), this protein is D-alanine--D-alanine ligase.